A 51-amino-acid polypeptide reads, in one-letter code: Lantibiotic flavucin (51 aa).

Positions 1–20 are excised as a propeptide; that stretch reads MSDFTLDFAEGDAADTVSPQ. The lanthionine (Ser-Cys) cross-link spans 23-27; that stretch reads SKSLC. 3 consecutive cross-links (beta-methyllanthionine (Thr-Cys)) follow at residues 28–31, 33–38, and 42–45; these read TPGC, TGWMMC, and TKGC.

Belongs to the type A lantibiotic family. In terms of processing, maturation of lantibiotics involves the enzymatic conversion of Thr, and Ser into dehydrated AA and the formation of thioether bonds with cysteine. This is followed by membrane translocation and cleavage of the modified precursor.

Its activity is regulated as follows. Antimicrobial activity depends on the dehydration degree and integrity of flavucin. Lanthionine-containing peptide antibiotic (lantibiotic) active on certain Gram-positive bacteria. The bactericidal activity of lantibiotics is based on depolarization of energized bacterial cytoplasmic membranes, initiated by the formation of aqueous transmembrane pores. Flavucin has high antimicrobial activity against several pathogenic bacteria such as S.aureus, E.faecalis, E.faecium and L.monocytogenes. Is also active against the Gram-negative P.aeruginosa. The sequence is that of Lantibiotic flavucin from Corynebacterium lipophiloflavum (strain ATCC 700352 / DSM 44291 / CCUG 37336 / JCM 10383 / DMMZ 1944).